Consider the following 376-residue polypeptide: MSDSERTSLPLVFDEPRGRKKPPRHLADLAPDERTAYAKELGLPGFRAKQLSTHYFSRLVDDPDQMTDLPAGQRAELVAGLLPGLMTPLRTMEADRGTTRKTLWRLFDGALVESVLMRYPDRATMCVSSQAGCGMACPFCATGQGGLQRNMSTAEIVEQVVAGARSLARGEVPGGPGRVSNVVFMGMGEPLANYKAVLGAVRRLTDPAPDGLGMSARGVTVSTVGLVPRMRQLADEGIPVTLALSLHAPDDELRNELVPINTRFSVAETVEAAWNYAKVTKRRVSIEYAMMRGINDQAWRADLLGDVLRGYGDWGWVHVNLIPLNPTPGSKWTASDPADEREFVRRLEAKAIPTTVRDTRGREIDGACGQLAATEA.

A disordered region spans residues 1–25 (MSDSERTSLPLVFDEPRGRKKPPRH). Glu113 functions as the Proton acceptor in the catalytic mechanism. Residues 119–362 (YPDRATMCVS…PTTVRDTRGR (244 aa)) enclose the Radical SAM core domain. Cys126 and Cys368 are joined by a disulfide. Cys133, Cys137, and Cys140 together coordinate [4Fe-4S] cluster. S-adenosyl-L-methionine is bound by residues 188-189 (GE), Ser222, 245-247 (SLH), and Asn325. Cys368 functions as the S-methylcysteine intermediate in the catalytic mechanism.

This sequence belongs to the radical SAM superfamily. RlmN family. The cofactor is [4Fe-4S] cluster.

It localises to the cytoplasm. The enzyme catalyses adenosine(2503) in 23S rRNA + 2 reduced [2Fe-2S]-[ferredoxin] + 2 S-adenosyl-L-methionine = 2-methyladenosine(2503) in 23S rRNA + 5'-deoxyadenosine + L-methionine + 2 oxidized [2Fe-2S]-[ferredoxin] + S-adenosyl-L-homocysteine. The catalysed reaction is adenosine(37) in tRNA + 2 reduced [2Fe-2S]-[ferredoxin] + 2 S-adenosyl-L-methionine = 2-methyladenosine(37) in tRNA + 5'-deoxyadenosine + L-methionine + 2 oxidized [2Fe-2S]-[ferredoxin] + S-adenosyl-L-homocysteine. Its function is as follows. Specifically methylates position 2 of adenine 2503 in 23S rRNA and position 2 of adenine 37 in tRNAs. The sequence is that of Probable dual-specificity RNA methyltransferase RlmN from Nocardioides sp. (strain ATCC BAA-499 / JS614).